Here is a 354-residue protein sequence, read N- to C-terminus: Chorismate synthase (354 aa).

Residue arginine 46 participates in NADP(+) binding. FMN is bound by residues 123–125 (RSS), 239–240 (NA), glycine 284, 299–303 (KPVAT), and arginine 325.

It belongs to the chorismate synthase family. In terms of assembly, homotetramer. Requires FMNH2 as cofactor.

It catalyses the reaction 5-O-(1-carboxyvinyl)-3-phosphoshikimate = chorismate + phosphate. Its pathway is metabolic intermediate biosynthesis; chorismate biosynthesis; chorismate from D-erythrose 4-phosphate and phosphoenolpyruvate: step 7/7. Functionally, catalyzes the anti-1,4-elimination of the C-3 phosphate and the C-6 proR hydrogen from 5-enolpyruvylshikimate-3-phosphate (EPSP) to yield chorismate, which is the branch point compound that serves as the starting substrate for the three terminal pathways of aromatic amino acid biosynthesis. This reaction introduces a second double bond into the aromatic ring system. This Azobacteroides pseudotrichonymphae genomovar. CFP2 protein is Chorismate synthase.